We begin with the raw amino-acid sequence, 444 residues long: Phosphoglucosamine mutase (444 aa).

Ser-103 acts as the Phosphoserine intermediate in catalysis. Residues Ser-103, Asp-241, Asp-243, and Asp-245 each coordinate Mg(2+). Phosphoserine is present on Ser-103.

The protein belongs to the phosphohexose mutase family. It depends on Mg(2+) as a cofactor. Post-translationally, activated by phosphorylation.

The catalysed reaction is alpha-D-glucosamine 1-phosphate = D-glucosamine 6-phosphate. In terms of biological role, catalyzes the conversion of glucosamine-6-phosphate to glucosamine-1-phosphate. This is Phosphoglucosamine mutase from Deinococcus geothermalis (strain DSM 11300 / CIP 105573 / AG-3a).